The chain runs to 86 residues: Large ribosomal subunit protein bL27 (86 aa).

The protein belongs to the bacterial ribosomal protein bL27 family.

This Xanthomonas oryzae pv. oryzae (strain PXO99A) protein is Large ribosomal subunit protein bL27.